A 520-amino-acid chain; its full sequence is Probable helicase MJECL08 (520 aa).

Residues Arg162, 171-176, and 501-502 contribute to the ATP site; these read GAGKSN and KI.

The protein belongs to the HerA family.

The catalysed reaction is Couples ATP hydrolysis with the unwinding of duplex DNA at the replication fork by translocating in the 5'-3' direction. This creates two antiparallel DNA single strands (ssDNA). The leading ssDNA polymer is the template for DNA polymerase III holoenzyme which synthesizes a continuous strand.. It carries out the reaction ATP + H2O = ADP + phosphate + H(+). The enzyme catalyses Couples ATP hydrolysis with the unwinding of duplex DNA by translocating in the 3'-5' direction.. In terms of biological role, a probably bidirectional DNA helicase. This is Probable helicase MJECL08 from Methanocaldococcus jannaschii (strain ATCC 43067 / DSM 2661 / JAL-1 / JCM 10045 / NBRC 100440) (Methanococcus jannaschii).